Consider the following 163-residue polypeptide: NADH-quinone oxidoreductase subunit I (163 aa).

4Fe-4S ferredoxin-type domains lie at 54–84 (LRRY…IDSA) and 94–123 (TRYD…ETHI). [4Fe-4S] cluster is bound by residues C64, C67, C70, C74, C103, C106, C109, and C113.

The protein belongs to the complex I 23 kDa subunit family. In terms of assembly, NDH-1 is composed of 14 different subunits. Subunits NuoA, H, J, K, L, M, N constitute the membrane sector of the complex. [4Fe-4S] cluster serves as cofactor.

It localises to the cell inner membrane. The catalysed reaction is a quinone + NADH + 5 H(+)(in) = a quinol + NAD(+) + 4 H(+)(out). Functionally, NDH-1 shuttles electrons from NADH, via FMN and iron-sulfur (Fe-S) centers, to quinones in the respiratory chain. The immediate electron acceptor for the enzyme in this species is believed to be ubiquinone. Couples the redox reaction to proton translocation (for every two electrons transferred, four hydrogen ions are translocated across the cytoplasmic membrane), and thus conserves the redox energy in a proton gradient. This chain is NADH-quinone oxidoreductase subunit I, found in Xanthomonas campestris pv. campestris (strain 8004).